The following is a 428-amino-acid chain: Adenylosuccinate synthetase (428 aa).

Residues 12-18 (GDEGKGK) and 40-42 (GHT) contribute to the GTP site. Residue Asp13 is the Proton acceptor of the active site. Mg(2+)-binding residues include Asp13 and Gly40. IMP is bound by residues 13-16 (DEGK), 38-41 (NAGH), Thr128, Arg142, Gln223, Thr238, and Arg302. The active-site Proton donor is the His41. Position 298–304 (298–304 (TTTGRPR)) interacts with substrate. GTP contacts are provided by residues Arg304, 330–332 (SID), and 412–414 (SVG).

This sequence belongs to the adenylosuccinate synthetase family. Homodimer. It depends on Mg(2+) as a cofactor.

The protein resides in the cytoplasm. The enzyme catalyses IMP + L-aspartate + GTP = N(6)-(1,2-dicarboxyethyl)-AMP + GDP + phosphate + 2 H(+). Its pathway is purine metabolism; AMP biosynthesis via de novo pathway; AMP from IMP: step 1/2. Plays an important role in the de novo pathway of purine nucleotide biosynthesis. Catalyzes the first committed step in the biosynthesis of AMP from IMP. This is Adenylosuccinate synthetase from Geobacillus sp. (strain WCH70).